The sequence spans 138 residues: Holo-[acyl-carrier-protein] synthase (138 aa).

The Mg(2+) site is built by Asp-8 and Glu-57.

Belongs to the P-Pant transferase superfamily. AcpS family. Requires Mg(2+) as cofactor.

The protein resides in the cytoplasm. The enzyme catalyses apo-[ACP] + CoA = holo-[ACP] + adenosine 3',5'-bisphosphate + H(+). Transfers the 4'-phosphopantetheine moiety from coenzyme A to a Ser of acyl-carrier-protein. The sequence is that of Holo-[acyl-carrier-protein] synthase from Phenylobacterium zucineum (strain HLK1).